Reading from the N-terminus, the 513-residue chain is Pleiotropic regulator 1 (513 aa).

Residue methionine 1 is modified to N-acetylmethionine. 2 positions are modified to phosphoserine: serine 119 and serine 200. WD repeat units follow at residues glycine 201–serine 240, glycine 243–histidine 282, glycine 285–threonine 324, glycine 327–threonine 366, asparagine 369–serine 409, glycine 410–arginine 448, and aspartate 459–threonine 498. Residue serine 390 is modified to Phosphoserine.

Belongs to the WD repeat PRL1/PRL2 family. As to quaternary structure, identified in the spliceosome C complex. Component of the PRP19-CDC5L splicing complex composed of a core complex comprising a homotetramer of PRPF19, CDC5L, PLRG1 and BCAS2, and at least three less stably associated proteins CTNNBL1, CWC15 and HSPA8. Interacts (via its WD40 repeat domain) directly with CDC5L (via its C-terminal); the interaction is required for mRNA splicing but not for spliceosome assembly. Component of the minor spliceosome, which splices U12-type introns. Within this complex, interacts with CRIPT. Also interacts directly in the complex with BCAS2 and PRPF19. Interacts with USB1.

Its subcellular location is the nucleus. It localises to the nucleus speckle. Functionally, involved in pre-mRNA splicing as component of the spliceosome. Component of the PRP19-CDC5L complex that forms an integral part of the spliceosome and is required for activating pre-mRNA splicing. As a component of the minor spliceosome, involved in the splicing of U12-type introns in pre-mRNAs. The protein is Pleiotropic regulator 1 (PLRG1) of Bos taurus (Bovine).